We begin with the raw amino-acid sequence, 197 residues long: Peptide deformylase (197 aa).

Fe cation is bound by residues C106 and H148. E149 is a catalytic residue. H152 contributes to the Fe cation binding site.

Belongs to the polypeptide deformylase family. It depends on Fe(2+) as a cofactor.

The enzyme catalyses N-terminal N-formyl-L-methionyl-[peptide] + H2O = N-terminal L-methionyl-[peptide] + formate. Its function is as follows. Removes the formyl group from the N-terminal Met of newly synthesized proteins. Requires at least a dipeptide for an efficient rate of reaction. N-terminal L-methionine is a prerequisite for activity but the enzyme has broad specificity at other positions. The polypeptide is Peptide deformylase (Mycobacterium marinum (strain ATCC BAA-535 / M)).